The following is a 264-amino-acid chain: Thymidylate synthase (264 aa).

R21 contacts dUMP. H51 contributes to the (6R)-5,10-methylene-5,6,7,8-tetrahydrofolate binding site. Residue 126-127 (RR) coordinates dUMP. The active-site Nucleophile is C146. DUMP is bound by residues 166–169 (RSAD), N177, and 207–209 (HIY). D169 lines the (6R)-5,10-methylene-5,6,7,8-tetrahydrofolate pocket. (6R)-5,10-methylene-5,6,7,8-tetrahydrofolate is bound at residue A263.

Belongs to the thymidylate synthase family. Bacterial-type ThyA subfamily. In terms of assembly, homodimer.

Its subcellular location is the cytoplasm. The catalysed reaction is dUMP + (6R)-5,10-methylene-5,6,7,8-tetrahydrofolate = 7,8-dihydrofolate + dTMP. It participates in pyrimidine metabolism; dTTP biosynthesis. In terms of biological role, catalyzes the reductive methylation of 2'-deoxyuridine-5'-monophosphate (dUMP) to 2'-deoxythymidine-5'-monophosphate (dTMP) while utilizing 5,10-methylenetetrahydrofolate (mTHF) as the methyl donor and reductant in the reaction, yielding dihydrofolate (DHF) as a by-product. This enzymatic reaction provides an intracellular de novo source of dTMP, an essential precursor for DNA biosynthesis. The sequence is that of Thymidylate synthase from Rhizobium meliloti (strain 1021) (Ensifer meliloti).